A 78-amino-acid chain; its full sequence is Large ribosomal subunit protein bL28 (78 aa).

The tract at residues 1 to 25 (MSRVCQVTGKRPTVGNNRSHARNAT) is disordered.

Belongs to the bacterial ribosomal protein bL28 family.

This is Large ribosomal subunit protein bL28 from Alteromonas mediterranea (strain DSM 17117 / CIP 110805 / LMG 28347 / Deep ecotype).